Here is a 359-residue protein sequence, read N- to C-terminus: Non-classical arabinogalactan protein 31 (359 aa).

The N-terminal stretch at 1-24 (MGFIGKSVLVSLVALWCFTSSVFT) is a signal peptide. Residues 31–215 (TQTPSLAPAP…PPVSPPTKPP (185 aa)) form a disordered region. The segment covering 44–66 (HHGHHHPHPPHHHHPHPHPHPHP) has biased composition (basic residues). A compositionally biased stretch (pro residues) spans 67 to 215 (PAKSPVKPPV…PPVSPPTKPP (149 aa)). 4-hydroxyproline is present on residues proline 71, proline 75, proline 79, proline 82, proline 83, proline 87, proline 91, proline 95, proline 99, proline 103, proline 107, proline 111, proline 114, proline 115, proline 119, proline 123, proline 127, proline 131, proline 135, proline 139, proline 143, proline 147, proline 151, proline 155, proline 159, proline 163, proline 167, proline 171, proline 175, proline 179, proline 183, proline 186, proline 187, proline 191, proline 195, proline 199, proline 203, proline 207, proline 210, proline 211, proline 215, and proline 219. O-linked (Ara...) hydroxyproline glycosylation is found at proline 71, proline 75, proline 79, proline 82, proline 83, proline 87, proline 91, proline 95, proline 99, proline 103, proline 107, proline 111, proline 114, proline 115, proline 119, proline 123, proline 127, proline 131, proline 135, proline 139, proline 143, proline 147, proline 151, proline 155, proline 159, proline 163, proline 167, proline 171, proline 175, proline 179, proline 183, proline 186, proline 187, proline 191, proline 195, proline 199, proline 203, proline 207, proline 210, proline 211, proline 215, and proline 219. Residues 90-109 (PPVYPPTKAPVKPPTKPPVK) form repeat 1. 3 consecutive repeat copies span residues 122 to 141 (PPVYPPTKAPVKPPTKPPVK), 142 to 161 (PPVYPPTKAPVKPPTKPPVK), and 162 to 181 (PPVYPPTKAPVKPPTKPPVK). N-linked (GlcNAc...) asparagine glycans are attached at residues asparagine 226 and asparagine 269.

The protein belongs to the non-classical AGP family. In terms of processing, hydroxylated on numerous prolines in the proline-rich region. Post-translationally, O-glycosylated on numerous hydroxyprolines in the proline-rich region; noncontiguous hydroxylproline residues are glycosylated with arabinogalactan. In terms of tissue distribution, expressed in vascular bundles of roots, leaves, sepals and stamen filaments, and pistils but not stigma.

It is found in the secreted. The protein localises to the cell wall. Proteoglycan that may contribute to the strengthening of cell walls. This Arabidopsis thaliana (Mouse-ear cress) protein is Non-classical arabinogalactan protein 31.